A 279-amino-acid polypeptide reads, in one-letter code: 3-methyl-2-oxobutanoate hydroxymethyltransferase (279 aa).

Mg(2+) contacts are provided by Asp43 and Asp82. 3-methyl-2-oxobutanoate is bound by residues Asp43 to Ser44, Asp82, and Lys112. A Mg(2+)-binding site is contributed by Glu114. Glu181 (proton acceptor) is an active-site residue.

It belongs to the PanB family. In terms of assembly, homodecamer; pentamer of dimers. The cofactor is Mg(2+).

Its subcellular location is the cytoplasm. It carries out the reaction 3-methyl-2-oxobutanoate + (6R)-5,10-methylene-5,6,7,8-tetrahydrofolate + H2O = 2-dehydropantoate + (6S)-5,6,7,8-tetrahydrofolate. Its pathway is cofactor biosynthesis; (R)-pantothenate biosynthesis; (R)-pantoate from 3-methyl-2-oxobutanoate: step 1/2. Catalyzes the reversible reaction in which hydroxymethyl group from 5,10-methylenetetrahydrofolate is transferred onto alpha-ketoisovalerate to form ketopantoate. In Bacillus anthracis (strain A0248), this protein is 3-methyl-2-oxobutanoate hydroxymethyltransferase.